A 332-amino-acid chain; its full sequence is Beta-hexosaminidase (332 aa).

Residues aspartate 62, arginine 70, arginine 131, and lysine 161–histidine 162 contribute to the substrate site. Histidine 174 acts as the Proton donor/acceptor in catalysis. Aspartate 244 (nucleophile) is an active-site residue.

The protein belongs to the glycosyl hydrolase 3 family. NagZ subfamily.

It localises to the cytoplasm. It catalyses the reaction Hydrolysis of terminal non-reducing N-acetyl-D-hexosamine residues in N-acetyl-beta-D-hexosaminides.. The protein operates within cell wall biogenesis; peptidoglycan recycling. Functionally, plays a role in peptidoglycan recycling by cleaving the terminal beta-1,4-linked N-acetylglucosamine (GlcNAc) from peptide-linked peptidoglycan fragments, giving rise to free GlcNAc, anhydro-N-acetylmuramic acid and anhydro-N-acetylmuramic acid-linked peptides. The chain is Beta-hexosaminidase from Pseudomonas aeruginosa (strain LESB58).